A 354-amino-acid chain; its full sequence is UDP-N-acetylglucosamine--N-acetylmuramyl-(pentapeptide) pyrophosphoryl-undecaprenol N-acetylglucosamine transferase (354 aa).

Residues 13–15 (SGG), Asn-125, Ser-189, Ile-242, 261–266 (ALTVSE), and Gln-286 contribute to the UDP-N-acetyl-alpha-D-glucosamine site.

This sequence belongs to the glycosyltransferase 28 family. MurG subfamily.

The protein resides in the cell inner membrane. It catalyses the reaction di-trans,octa-cis-undecaprenyl diphospho-N-acetyl-alpha-D-muramoyl-L-alanyl-D-glutamyl-meso-2,6-diaminopimeloyl-D-alanyl-D-alanine + UDP-N-acetyl-alpha-D-glucosamine = di-trans,octa-cis-undecaprenyl diphospho-[N-acetyl-alpha-D-glucosaminyl-(1-&gt;4)]-N-acetyl-alpha-D-muramoyl-L-alanyl-D-glutamyl-meso-2,6-diaminopimeloyl-D-alanyl-D-alanine + UDP + H(+). The protein operates within cell wall biogenesis; peptidoglycan biosynthesis. Functionally, cell wall formation. Catalyzes the transfer of a GlcNAc subunit on undecaprenyl-pyrophosphoryl-MurNAc-pentapeptide (lipid intermediate I) to form undecaprenyl-pyrophosphoryl-MurNAc-(pentapeptide)GlcNAc (lipid intermediate II). The protein is UDP-N-acetylglucosamine--N-acetylmuramyl-(pentapeptide) pyrophosphoryl-undecaprenol N-acetylglucosamine transferase of Buchnera aphidicola subsp. Acyrthosiphon pisum (strain APS) (Acyrthosiphon pisum symbiotic bacterium).